The sequence spans 248 residues: Functional amyloid sbunit FapE (248 aa).

An N-terminal signal peptide occupies residues 1 to 20 (MNTSRWLTALCLAASMPAYA).

Belongs to the FapE family. A minor component of purified amyloid fibrils. Fibrils are resistant to boiling in 2% (weight/vol) SDS and require &gt;90% (vol/vol) formic acid to dissolve.

It localises to the fimbrium. The protein localises to the secreted. Functionally, a minor component of the functional amyloid in this bacterium. Upon overexpression of the endogenous six-gene locus (fapA-fapF) in situ, cells form large clumps during liquid growth, make large amounts of biofilm and produce amyloid fibrils. Expression of the 6 gene operon in E.coli strain BL21(DE3) induces flocculation and biofilm formation with copious extracellular fibrils. The chain is Functional amyloid sbunit FapE from Pseudomonas fluorescens.